We begin with the raw amino-acid sequence, 121 residues long: Ribonuclease P protein component (121 aa).

It belongs to the RnpA family. In terms of assembly, consists of a catalytic RNA component (M1 or rnpB) and a protein subunit.

It catalyses the reaction Endonucleolytic cleavage of RNA, removing 5'-extranucleotides from tRNA precursor.. RNaseP catalyzes the removal of the 5'-leader sequence from pre-tRNA to produce the mature 5'-terminus. It can also cleave other RNA substrates such as 4.5S RNA. The protein component plays an auxiliary but essential role in vivo by binding to the 5'-leader sequence and broadening the substrate specificity of the ribozyme. This chain is Ribonuclease P protein component, found in Coxiella burnetii (strain Dugway 5J108-111).